Consider the following 85-residue polypeptide: Serine protease inhibitor Kazal-type 7 (85 aa).

The N-terminal stretch at 1-19 (MKITGGLLLLCTVVYFCSS) is a signal peptide. In terms of domain architecture, Kazal-like spans 26 to 85 (SPKKVDCSIYKKYPVVAIPCPITYLPVCGSDYITYGNECHLCTESLKSNGRVQFLHDGSC). 3 cysteine pairs are disulfide-bonded: Cys32–Cys67, Cys45–Cys64, and Cys53–Cys85.

Its subcellular location is the secreted. Probable serine protease inhibitor. This chain is Serine protease inhibitor Kazal-type 7 (SPINK7), found in Homo sapiens (Human).